The sequence spans 146 residues: Transcriptional regulator MraZ (146 aa).

SpoVT-AbrB domains are found at residues 5–51 (NHPT…PLQE) and 80–123 (GQMV…NHEA).

It belongs to the MraZ family. In terms of assembly, forms oligomers.

It localises to the cytoplasm. Its subcellular location is the nucleoid. This Acidobacterium capsulatum (strain ATCC 51196 / DSM 11244 / BCRC 80197 / JCM 7670 / NBRC 15755 / NCIMB 13165 / 161) protein is Transcriptional regulator MraZ.